We begin with the raw amino-acid sequence, 465 residues long: Cysteine--tRNA ligase (465 aa).

Zn(2+) is bound at residue Cys-27. The 'HIGH' region motif lies at 29-39 (PTVYDDAHLGH). Cys-207, His-237, and Glu-241 together coordinate Zn(2+). Positions 269-273 (KMSKS) match the 'KMSKS' region motif. Lys-272 contributes to the ATP binding site.

Belongs to the class-I aminoacyl-tRNA synthetase family. As to quaternary structure, monomer. Requires Zn(2+) as cofactor.

It localises to the cytoplasm. It catalyses the reaction tRNA(Cys) + L-cysteine + ATP = L-cysteinyl-tRNA(Cys) + AMP + diphosphate. This is Cysteine--tRNA ligase from Helicobacter pylori (strain P12).